A 175-amino-acid polypeptide reads, in one-letter code: Nascent polypeptide-associated complex subunit beta (175 aa).

2 disordered regions span residues 1–36 (MDKEKLAKLQSQVRIGGKGTPRRKVVKKSVTSSQGD) and 129–175 (RQAA…EELE). Positions 34–101 (QGDDRKLQAA…GQTKELTELV (68 aa)) constitute an NAC-A/B domain. A compositionally biased stretch (acidic residues) spans 149–163 (EGDDEIPDLVDNFDE). Residues 164–175 (AEVKKSDLEELE) are compositionally biased toward basic and acidic residues.

The protein belongs to the NAC-beta family. As to quaternary structure, part of the nascent polypeptide-associated complex (NAC), consisting of EGD2 and EGD1. NAC associates with ribosomes via EGD1.

The protein resides in the cytoplasm. It is found in the nucleus. Functionally, component of the nascent polypeptide-associated complex (NAC), a dynamic component of the ribosomal exit tunnel, protecting the emerging polypeptides from interaction with other cytoplasmic proteins to ensure appropriate nascent protein targeting. The NAC complex also promotes mitochondrial protein import by enhancing productive ribosome interactions with the outer mitochondrial membrane and blocks the inappropriate interaction of ribosomes translating non-secretory nascent polypeptides with translocation sites in the membrane of the endoplasmic reticulum. EGD1 may act as a transcription factor that exert a negative effect on the expression of several genes that are transcribed by RNA polymerase II. In Cryptococcus neoformans var. neoformans serotype D (strain B-3501A) (Filobasidiella neoformans), this protein is Nascent polypeptide-associated complex subunit beta (EGD1).